We begin with the raw amino-acid sequence, 236 residues long: Penton protein H240R (236 aa).

The protein belongs to the asfivirus H240R family.

The protein localises to the virion. Its function is as follows. Forms the penton at the fivefold vertices of the icosahedral capsid. Together with the minor capsid proteins (p17, p49, and M1249L), forms a complicated network immediately below the outer capsid shell, stabilizing the whole capsid. The protein is Penton protein H240R of African swine fever virus (isolate Warthog/Namibia/Wart80/1980) (ASFV).